The primary structure comprises 917 residues: Lipoxygenase 6, chloroplastic (917 aa).

A chloroplast-targeting transit peptide spans Met-1–Arg-40. Basic and acidic residues predominate over residues Glu-46 to Lys-57. The segment at Glu-46–Ser-66 is disordered. Positions Glu-98–Arg-216 constitute a PLAT domain. The 699-residue stretch at Pro-219–Ile-917 folds into the Lipoxygenase domain. The Fe cation site is built by His-575, His-580, His-767, and Asn-771. A disordered region spans residues Lys-880–His-904. Residue Ile-917 coordinates Fe cation.

This sequence belongs to the lipoxygenase family. Fe cation serves as cofactor.

Its subcellular location is the plastid. It is found in the chloroplast. The enzyme catalyses (9Z,12Z)-octadecadienoate + O2 = (13S)-hydroperoxy-(9Z,11E)-octadecadienoate. It catalyses the reaction (9Z,12Z,15Z)-octadecatrienoate + O2 = (13S)-hydroperoxy-(9Z,11E,15Z)-octadecatrienoate. Its pathway is lipid metabolism; oxylipin biosynthesis. Functionally, plant lipoxygenases may be involved in a number of diverse aspects of plant physiology including growth and development, pest resistance, and senescence or responses to wounding. Catalyzes the hydroperoxidation of lipids containing a cis,cis-1,4-pentadiene structure. 13S-lipoxygenase that can use linolenic acid as substrates. The sequence is that of Lipoxygenase 6, chloroplastic from Arabidopsis thaliana (Mouse-ear cress).